The sequence spans 382 residues: D-galactonate dehydratase (382 aa).

Asp183 lines the Mg(2+) pocket. His185 (proton donor) is an active-site residue. Positions 209 and 235 each coordinate Mg(2+). The active-site Proton acceptor is His285.

It belongs to the mandelate racemase/muconate lactonizing enzyme family. GalD subfamily. Mg(2+) is required as a cofactor.

The catalysed reaction is D-galactonate = 2-dehydro-3-deoxy-D-galactonate + H2O. Its pathway is carbohydrate acid metabolism; D-galactonate degradation; D-glyceraldehyde 3-phosphate and pyruvate from D-galactonate: step 1/3. In terms of biological role, catalyzes the dehydration of D-galactonate to 2-keto-3-deoxy-D-galactonate. This chain is D-galactonate dehydratase, found in Ralstonia pickettii (strain 12J).